A 380-amino-acid polypeptide reads, in one-letter code: Protein Wnt-5a (380 aa).

The first 37 residues, 1 to 37 (MKKPIGILSPGVALGTAGGAMSSKFFLMALATFFSFA), serve as a signal peptide directing secretion. A propeptide spanning residues 38–61 (QVVIEANSWWSLGMNNPVQMSEVH) is cleaved from the precursor. Cys104 and Cys115 form a disulfide bridge. N-linked (GlcNAc...) asparagine glycans are attached at residues Asn114 and Asn120. Disulfide bonds link Cys154–Cys162, Cys164–Cys182, Cys238–Cys252, Cys240–Cys247, Cys309–Cys340, Cys325–Cys335, Cys339–Cys379, Cys355–Cys370, Cys357–Cys367, and Cys362–Cys363. Ser244 carries O-palmitoleoyl serine; by PORCN lipidation. N-linked (GlcNAc...) asparagine glycosylation is found at Asn312 and Asn326.

The protein belongs to the Wnt family. Forms a soluble 1:1 complex with AFM; this prevents oligomerization and is required for prolonged biological activity. The complex with AFM may represent the physiological form in body fluids. Homooligomer; disulfide-linked, leading to inactivation (in vitro). Interacts with PORCN. Interacts with WLS. Interacts with glypican GCP3. Interacts with PKD1 (via extracellular domain). Interacts with TMEM67. In terms of processing, glycosylation is necessary for secretion but not for activity. Palmitoleoylation is required for efficient binding to frizzled receptors. Depalmitoleoylation leads to Wnt signaling pathway inhibition. Post-translationally, proteolytic processing by TIKI1 and TIKI2 promotes oxidation and formation of large disulfide-bond oligomers, leading to inactivation of WNT5A.

It localises to the secreted. The protein resides in the extracellular space. Its subcellular location is the extracellular matrix. Functionally, ligand for members of the frizzled family of seven transmembrane receptors. Can activate or inhibit canonical Wnt signaling, depending on receptor context. In the presence of FZD4, activates beta-catenin signaling. In the presence of ROR2, inhibits the canonical Wnt pathway by promoting beta-catenin degradation through a GSK3-independent pathway which involves down-regulation of beta-catenin-induced reporter gene expression. Suppression of the canonical pathway allows chondrogenesis to occur and inhibits tumor formation. Stimulates cell migration. Decreases proliferation, migration, invasiveness and clonogenicity of carcinoma cells and may act as a tumor suppressor. Mediates motility of melanoma cells. Required during embryogenesis for extension of the primary anterior-posterior axis and for outgrowth of limbs and the genital tubercle. Inhibits type II collagen expression in chondrocytes. This chain is Protein Wnt-5a (Wnt5a), found in Rattus norvegicus (Rat).